A 201-amino-acid polypeptide reads, in one-letter code: ADP-ribosylation factor-like protein 4D (201 aa).

Gly2 carries the N-myristoyl glycine lipid modification. GTP contacts are provided by residues 28–35 (GLDSAGKT), 76–80 (DVGGQ), and 135–138 (NKQD).

This sequence belongs to the small GTPase superfamily. Arf family. In terms of assembly, interacts with CYTH2; the interaction is direct and ARL4D GTP-dependent. Does not interact with ARL4D.

It localises to the nucleus. It is found in the nucleolus. The protein resides in the cell membrane. The protein localises to the cytoplasm. Small GTP-binding protein which cycles between an inactive GDP-bound and an active GTP-bound form, and the rate of cycling is regulated by guanine nucleotide exchange factors (GEF) and GTPase-activating proteins (GAP). GTP-binding protein that does not act as an allosteric activator of the cholera toxin catalytic subunit. Recruits CYTH1, CYTH2, CYTH3 and CYTH4 to the plasma membrane in GDP-bound form. The protein is ADP-ribosylation factor-like protein 4D (ARL4D) of Homo sapiens (Human).